The chain runs to 355 residues: 3-dehydroquinate synthase (355 aa).

NAD(+)-binding positions include 71–76 (EGEASK), 105–109 (GVVGD), 129–130 (TS), K142, and K151. Zn(2+) is bound by residues E184, H246, and H263.

Belongs to the sugar phosphate cyclases superfamily. Dehydroquinate synthase family. The cofactor is Co(2+). It depends on Zn(2+) as a cofactor. NAD(+) is required as a cofactor.

Its subcellular location is the cytoplasm. It catalyses the reaction 7-phospho-2-dehydro-3-deoxy-D-arabino-heptonate = 3-dehydroquinate + phosphate. It participates in metabolic intermediate biosynthesis; chorismate biosynthesis; chorismate from D-erythrose 4-phosphate and phosphoenolpyruvate: step 2/7. Functionally, catalyzes the conversion of 3-deoxy-D-arabino-heptulosonate 7-phosphate (DAHP) to dehydroquinate (DHQ). The polypeptide is 3-dehydroquinate synthase (Streptococcus thermophilus (strain ATCC BAA-491 / LMD-9)).